Reading from the N-terminus, the 263-residue chain is 4-hydroxy-tetrahydrodipicolinate reductase (263 aa).

NAD(+) contacts are provided by residues 7 to 12 and Asp-33; that span reads GASGRM. Residue Arg-34 coordinates NADP(+). NAD(+) is bound by residues 96-98 and 120-123; these read GTT and APNM. Residue His-153 is the Proton donor/acceptor of the active site. His-154 provides a ligand contact to (S)-2,3,4,5-tetrahydrodipicolinate. Residue Lys-157 is the Proton donor of the active site. 163 to 164 provides a ligand contact to (S)-2,3,4,5-tetrahydrodipicolinate; the sequence is GT.

Belongs to the DapB family.

It is found in the cytoplasm. The catalysed reaction is (S)-2,3,4,5-tetrahydrodipicolinate + NAD(+) + H2O = (2S,4S)-4-hydroxy-2,3,4,5-tetrahydrodipicolinate + NADH + H(+). It catalyses the reaction (S)-2,3,4,5-tetrahydrodipicolinate + NADP(+) + H2O = (2S,4S)-4-hydroxy-2,3,4,5-tetrahydrodipicolinate + NADPH + H(+). Its pathway is amino-acid biosynthesis; L-lysine biosynthesis via DAP pathway; (S)-tetrahydrodipicolinate from L-aspartate: step 4/4. In terms of biological role, catalyzes the conversion of 4-hydroxy-tetrahydrodipicolinate (HTPA) to tetrahydrodipicolinate. In Ralstonia pickettii (strain 12J), this protein is 4-hydroxy-tetrahydrodipicolinate reductase.